A 449-amino-acid polypeptide reads, in one-letter code: F-box/LRR-repeat protein At3g60040 (449 aa).

Residues 12-64 (RDAISWLPDEVLGKILSLIPTKQAVSTSLLAKKWRTIFRLVDHLELDDSFSLQ) form the F-box domain. LRR repeat units follow at residues 161-188 (LTLG…FIDT), 191-215 (FYDI…SVHH), 216-237 (HDFI…SVDY), 239-263 (CPDD…EYSH), 287-312 (ERKV…HLSP), and 340-365 (KNKR…IVKD).

The sequence is that of F-box/LRR-repeat protein At3g60040 from Arabidopsis thaliana (Mouse-ear cress).